The sequence spans 175 residues: Phosphatidylglycerol/phosphatidylinositol transfer protein (175 aa).

A signal peptide spans 1 to 21; sequence MKFLSTAAALLVCLAPVSTTA. The propeptide occupies 22–37; the sequence is RSLDFFKSSQSPIQAQ.

Belongs to the NPC2 family. As to quaternary structure, monomer.

The protein localises to the cytoplasm. The protein resides in the cytoplasmic vesicle. It is found in the golgi apparatus. Functionally, catalyzes the intermembrane transfer of phosphatidylglycerol and phosphatidylinositol. The sequence is that of Phosphatidylglycerol/phosphatidylinositol transfer protein (pltp) from Aspergillus oryzae (strain ATCC 42149 / RIB 40) (Yellow koji mold).